Here is a 310-residue protein sequence, read N- to C-terminus: Homoserine O-acetyltransferase (310 aa).

The active-site Acyl-thioester intermediate is cysteine 142. Positions 163 and 192 each coordinate substrate. Histidine 235 acts as the Proton acceptor in catalysis. The active site involves glutamate 237. Arginine 249 is a binding site for substrate.

It belongs to the MetA family.

It is found in the cytoplasm. It catalyses the reaction L-homoserine + acetyl-CoA = O-acetyl-L-homoserine + CoA. It functions in the pathway amino-acid biosynthesis; L-methionine biosynthesis via de novo pathway; O-acetyl-L-homoserine from L-homoserine: step 1/1. Functionally, transfers an acetyl group from acetyl-CoA to L-homoserine, forming acetyl-L-homoserine. This chain is Homoserine O-acetyltransferase, found in Agathobacter rectalis (strain ATCC 33656 / DSM 3377 / JCM 17463 / KCTC 5835 / VPI 0990) (Eubacterium rectale).